A 625-amino-acid chain; its full sequence is Chaperone protein HtpG (625 aa).

The segment at M1 to R341 is a; substrate-binding. The segment at E342–K551 is b. Positions V552–A625 are c.

This sequence belongs to the heat shock protein 90 family. In terms of assembly, homodimer.

Its subcellular location is the cytoplasm. In terms of biological role, molecular chaperone. Has ATPase activity. The polypeptide is Chaperone protein HtpG (Halalkalibacterium halodurans (strain ATCC BAA-125 / DSM 18197 / FERM 7344 / JCM 9153 / C-125) (Bacillus halodurans)).